The sequence spans 94 residues: Putative pterin-4-alpha-carbinolamine dehydratase (94 aa).

This sequence belongs to the pterin-4-alpha-carbinolamine dehydratase family.

It carries out the reaction (4aS,6R)-4a-hydroxy-L-erythro-5,6,7,8-tetrahydrobiopterin = (6R)-L-erythro-6,7-dihydrobiopterin + H2O. In Mycobacterium sp. (strain JLS), this protein is Putative pterin-4-alpha-carbinolamine dehydratase.